The following is a 367-amino-acid chain: Flagellar P-ring protein (367 aa).

An N-terminal signal peptide occupies residues 1–21 (MYVFKALAGIVLALVATLAHA).

This sequence belongs to the FlgI family. In terms of assembly, the basal body constitutes a major portion of the flagellar organelle and consists of four rings (L,P,S, and M) mounted on a central rod.

The protein resides in the periplasm. The protein localises to the bacterial flagellum basal body. Its function is as follows. Assembles around the rod to form the L-ring and probably protects the motor/basal body from shearing forces during rotation. The protein is Flagellar P-ring protein of Salmonella choleraesuis (strain SC-B67).